Consider the following 453-residue polypeptide: Alpha-2B adrenergic receptor (453 aa).

Residues 1–17 (MSGPTMDHQEPYSVQAT) lie on the Extracellular side of the membrane. Residues 18–42 (AAIASAITFLILFTIFGNALVILAV) traverse the membrane as a helical segment. Residues 43–54 (LTSRSLRAPQNL) are Cytoplasmic-facing. Residues 55-80 (FLVSLAAADILVATLIIPFSLANELL) traverse the membrane as a helical segment. Residues 81–90 (GYWYFWRAWC) lie on the Extracellular side of the membrane. Residues Cys90 and Cys169 are joined by a disulfide bond. The chain crosses the membrane as a helical span at residues 91-113 (EVYLALDVLFCTSSIVHLCAISL). Residues 114 to 135 (DRYWAVSRALEYNSKRTPRRIK) lie on the Cytoplasmic side of the membrane. The helical transmembrane segment at 136-158 (CIILTVWLIAAVISLPPLIYKGD) threads the bilayer. Over 159–174 (QRPEPRGLPQCELNQE) the chain is Extracellular. The helical transmembrane segment at 175-198 (AWYILASSIGSFFAPCLIMILVYL) threads the bilayer. Topologically, residues 199-375 (RIYVIAKRSH…LSREKRFTFV (177 aa)) are cytoplasmic. Residues 213–331 (GAKRGSGEGE…PASVCNPPLQ (119 aa)) form a disordered region. Polar residues predominate over residues 287 to 297 (GQGQKKGTSGA). Acidic residues predominate over residues 300–314 (EEGDEEDEEEVEECE). Residues 376-399 (LAVVIGVFVVCWFPFFFSYSLGAI) form a helical membrane-spanning segment. The Extracellular segment spans residues 400 to 408 (CPQHCKVPH). Residues 409 to 432 (GLFQFFFWIGYCNSSLNPVIYTVF) traverse the membrane as a helical segment. At 433 to 453 (NQDFRRAFRRILCRPWTQTGW) the chain is on the cytoplasmic side. A lipid anchor (S-palmitoyl cysteine) is attached at Cys445.

The protein belongs to the G-protein coupled receptor 1 family. Adrenergic receptor subfamily. ADRA2B sub-subfamily. Interacts with RAB26. Interacts with PPP1R9B. Interacts with GGA1, GGA2 and GGA3.

The protein resides in the cell membrane. Its function is as follows. Alpha-2 adrenergic receptors mediate the catecholamine-induced inhibition of adenylate cyclase through the action of G proteins. The sequence is that of Alpha-2B adrenergic receptor (Adra2b) from Rattus norvegicus (Rat).